The sequence spans 131 residues: Small ribosomal subunit protein uS8 (131 aa).

This sequence belongs to the universal ribosomal protein uS8 family. As to quaternary structure, part of the 30S ribosomal subunit. Contacts proteins S5 and S12.

In terms of biological role, one of the primary rRNA binding proteins, it binds directly to 16S rRNA central domain where it helps coordinate assembly of the platform of the 30S subunit. The sequence is that of Small ribosomal subunit protein uS8 from Sulfurovum sp. (strain NBC37-1).